A 179-amino-acid chain; its full sequence is Large ribosomal subunit protein uL5 (179 aa).

It belongs to the universal ribosomal protein uL5 family. As to quaternary structure, part of the 50S ribosomal subunit; part of the 5S rRNA/L5/L18/L25 subcomplex. Contacts the 5S rRNA and the P site tRNA. Forms a bridge to the 30S subunit in the 70S ribosome.

Its function is as follows. This is one of the proteins that bind and probably mediate the attachment of the 5S RNA into the large ribosomal subunit, where it forms part of the central protuberance. In the 70S ribosome it contacts protein S13 of the 30S subunit (bridge B1b), connecting the 2 subunits; this bridge is implicated in subunit movement. Contacts the P site tRNA; the 5S rRNA and some of its associated proteins might help stabilize positioning of ribosome-bound tRNAs. The protein is Large ribosomal subunit protein uL5 of Salmonella agona (strain SL483).